Reading from the N-terminus, the 1009-residue chain is C2 domain-containing protein aex-1 (1009 aa).

Residues 812-945 form the C2 domain; the sequence is NAPHVDVHIS…ASEEKPTQRL (134 aa).

It belongs to the unc-13 family. In terms of tissue distribution, expressed in intestine, body wall muscles and some amphid neurons.

Its function is as follows. Involved in retrograde signaling from post-synaptic cells to pre-synaptic neurons, probably by regulating vesicle exocytosis in post-synaptic cells. Acts in muscles, to regulate the localization of synaptic vesicle fusion protein unc-13 likely during vesicle exocytosis and thus regulate retrograde signaling at the neuromuscular junction (NMJ). Regulates anterior body muscle contractions (aBOC) and the expulsion steps during the defecation motor program (DMP). Probably by regulating DMP, plays a homeostatic role in the uptake of triglycerides. Regulates locomotion. The sequence is that of C2 domain-containing protein aex-1 from Caenorhabditis elegans.